We begin with the raw amino-acid sequence, 569 residues long: Urease subunit alpha (569 aa).

Residues 131–569 enclose the Urease domain; the sequence is GAIDSHIHFI…LPLAQRYLLL (439 aa). The Ni(2+) site is built by His-136, His-138, and Lys-219. Lys-219 bears the N6-carboxylysine mark. His-221 lines the substrate pocket. Ni(2+) is bound by residues His-248 and His-274. Catalysis depends on His-322, which acts as the Proton donor. A Ni(2+)-binding site is contributed by Asp-362.

This sequence belongs to the metallo-dependent hydrolases superfamily. Urease alpha subunit family. As to quaternary structure, heterotrimer of UreA (gamma), UreB (beta) and UreC (alpha) subunits. Three heterotrimers associate to form the active enzyme. Ni cation serves as cofactor. In terms of processing, carboxylation allows a single lysine to coordinate two nickel ions.

It is found in the cytoplasm. The enzyme catalyses urea + 2 H2O + H(+) = hydrogencarbonate + 2 NH4(+). It participates in nitrogen metabolism; urea degradation; CO(2) and NH(3) from urea (urease route): step 1/1. This is Urease subunit alpha from Prochlorococcus marinus (strain NATL2A).